Consider the following 37-residue polypeptide: Large ribosomal subunit protein bL36 (37 aa).

It belongs to the bacterial ribosomal protein bL36 family.

This chain is Large ribosomal subunit protein bL36, found in Geobacter sp. (strain M21).